Here is a 248-residue protein sequence, read N- to C-terminus: UDP-2,3-diacylglucosamine hydrolase (248 aa).

Residues Asp-7, His-9, Asp-40, Asn-78, and His-113 each contribute to the Mn(2+) site. Asn-78–Arg-79 contacts substrate. Residues Asp-121, Ser-159, Thr-163, Lys-166, and His-194 each contribute to the substrate site. Mn(2+) is bound by residues His-194 and His-196.

It belongs to the LpxH family. Requires Mn(2+) as cofactor.

It localises to the cell inner membrane. The enzyme catalyses UDP-2-N,3-O-bis[(3R)-3-hydroxytetradecanoyl]-alpha-D-glucosamine + H2O = 2-N,3-O-bis[(3R)-3-hydroxytetradecanoyl]-alpha-D-glucosaminyl 1-phosphate + UMP + 2 H(+). The protein operates within glycolipid biosynthesis; lipid IV(A) biosynthesis; lipid IV(A) from (3R)-3-hydroxytetradecanoyl-[acyl-carrier-protein] and UDP-N-acetyl-alpha-D-glucosamine: step 4/6. In terms of biological role, hydrolyzes the pyrophosphate bond of UDP-2,3-diacylglucosamine to yield 2,3-diacylglucosamine 1-phosphate (lipid X) and UMP by catalyzing the attack of water at the alpha-P atom. Involved in the biosynthesis of lipid A, a phosphorylated glycolipid that anchors the lipopolysaccharide to the outer membrane of the cell. This is UDP-2,3-diacylglucosamine hydrolase from Pseudomonas syringae pv. syringae (strain B728a).